We begin with the raw amino-acid sequence, 76 residues long: Large ribosomal subunit protein uL29 (76 aa).

This sequence belongs to the universal ribosomal protein uL29 family.

This is Large ribosomal subunit protein uL29 from Corynebacterium aurimucosum (strain ATCC 700975 / DSM 44827 / CIP 107346 / CN-1) (Corynebacterium nigricans).